We begin with the raw amino-acid sequence, 488 residues long: Ribulose bisphosphate carboxylase large chain (488 aa).

The substrate site is built by Asn-127 and Thr-177. Lys-179 (proton acceptor) is an active-site residue. Substrate is bound at residue Lys-181. Mg(2+) contacts are provided by Lys-205, Asp-207, and Glu-208. Lys-205 is subject to N6-carboxylysine. His-297 functions as the Proton acceptor in the catalytic mechanism. Positions 298, 330, and 382 each coordinate substrate.

This sequence belongs to the RuBisCO large chain family. Type I subfamily. Heterohexadecamer of 8 large chains and 8 small chains. Requires Mg(2+) as cofactor.

The protein localises to the plastid. Its subcellular location is the chloroplast. It catalyses the reaction 2 (2R)-3-phosphoglycerate + 2 H(+) = D-ribulose 1,5-bisphosphate + CO2 + H2O. The catalysed reaction is D-ribulose 1,5-bisphosphate + O2 = 2-phosphoglycolate + (2R)-3-phosphoglycerate + 2 H(+). Its function is as follows. RuBisCO catalyzes two reactions: the carboxylation of D-ribulose 1,5-bisphosphate, the primary event in carbon dioxide fixation, as well as the oxidative fragmentation of the pentose substrate in the photorespiration process. Both reactions occur simultaneously and in competition at the same active site. In Antithamnion sp. (Red alga), this protein is Ribulose bisphosphate carboxylase large chain.